The chain runs to 222 residues: Flagellar L-ring protein (222 aa).

An N-terminal signal peptide occupies residues Met-1–Gly-21. Cys-22 carries N-palmitoyl cysteine lipidation. Cys-22 carries the S-diacylglycerol cysteine lipid modification.

It belongs to the FlgH family. As to quaternary structure, the basal body constitutes a major portion of the flagellar organelle and consists of four rings (L,P,S, and M) mounted on a central rod.

It localises to the cell outer membrane. Its subcellular location is the bacterial flagellum basal body. In terms of biological role, assembles around the rod to form the L-ring and probably protects the motor/basal body from shearing forces during rotation. The protein is Flagellar L-ring protein of Methylobacillus flagellatus (strain ATCC 51484 / DSM 6875 / VKM B-1610 / KT).